The chain runs to 154 residues: Ribosome maturation factor RimP (154 aa).

The protein belongs to the RimP family.

Its subcellular location is the cytoplasm. In terms of biological role, required for maturation of 30S ribosomal subunits. In Clostridium perfringens (strain ATCC 13124 / DSM 756 / JCM 1290 / NCIMB 6125 / NCTC 8237 / Type A), this protein is Ribosome maturation factor RimP.